The primary structure comprises 336 residues: Inositol 2-dehydrogenase (336 aa).

This sequence belongs to the Gfo/Idh/MocA family. In terms of assembly, homotetramer.

It catalyses the reaction myo-inositol + NAD(+) = scyllo-inosose + NADH + H(+). Its function is as follows. Involved in the oxidation of myo-inositol (MI) to 2-keto-myo-inositol (2KMI or 2-inosose). The protein is Inositol 2-dehydrogenase of Paracoccus denitrificans (strain Pd 1222).